Here is a 190-residue protein sequence, read N- to C-terminus: Elongation factor P-like protein (190 aa).

This sequence belongs to the elongation factor P family.

In Marinomonas sp. (strain MWYL1), this protein is Elongation factor P-like protein.